The chain runs to 322 residues: uncharacterized protein (322 aa).

9 consecutive transmembrane segments (helical) span residues 5-25, 37-57, 71-91, 109-129, 153-173, 189-209, 245-265, 268-288, and 300-320; these read LISI…IPGI, IGPS…FKET, LPLL…LTSF, MMYV…MPFI, SFKM…LPFV, LFSL…VIMI, LLLI…APDI, PITI…ATFV, and IYPI…FALL.

Its subcellular location is the cell membrane. This is an uncharacterized protein from Methanocaldococcus jannaschii (strain ATCC 43067 / DSM 2661 / JAL-1 / JCM 10045 / NBRC 100440) (Methanococcus jannaschii).